The primary structure comprises 1071 residues: Tricorn protease (1071 aa).

The segment at 39 to 310 (MPNLLLNPDI…EKIEKIEIGD (272 aa)) is six-bladed beta propeller. Residues 131–132 (RR) are binds the substrate's C-terminus. The tract at residues 326 to 675 (AEDFSPLDGD…EDERTVETDK (350 aa)) is seven-bladed beta propeller. The tract at residues 679 to 745 (VSSIHEEFLQ…VEMQGEYRTS (67 aa)) is C-1; helical bundle. His-746 serves as the catalytic Charge relay system. The interval 761-855 (RSGRIACDFK…DLMIDILDDD (95 aa)) is PDZ-like. Residues 856–1061 (RFIRYRSWVE…IDALIEELRN (206 aa)) are C-2; alpha-beta sandwich. 916-918 (GGG) lines the substrate pocket. Ser-965 functions as the Nucleophile in the catalytic mechanism. 993–995 (GIT) contacts substrate. The active-site Charge relay system is Glu-1023.

It belongs to the peptidase S41B family. In terms of assembly, part of the Tricorn proteolytic complex. Assembles to form a hexameric toroid, 20 copies of which may then assemble to form an icosahedral supermolecule of 14.6 MDa.

The protein resides in the cytoplasm. Functionally, tricorn degrades oligopeptides (probably derived from the proteasome) and channels the products to F1, F2 and F3 proteases, which then catalyze the terminal degradation step, yielding free amino acids. The sequence is that of Tricorn protease (tri) from Thermoplasma acidophilum (strain ATCC 25905 / DSM 1728 / JCM 9062 / NBRC 15155 / AMRC-C165).